The sequence spans 249 residues: MKYINQFMKISKGFLVPSSTIGLNSKTYHYKFPLLSFVREFSNGSYLRESAQNPANLGSQKGSDIFSMLANQKDDSNRQQKEERVKERPRSRISFKKQETMDPSYTLQSMVLRSSLKKVGALCRQIAHKPFYHALLQMKMSDKKISKYIATALVSARENAVREAGLDESTLYVDQIWVGKAKYLKKLITMGRGGRAIERSPRVRVTVVLRDERALLRDLQRRQQRLERKKVWTPLPNRPIYLKSNFFTC.

The N-terminal 22 residues, 1–22 (MKYINQFMKISKGFLVPSSTIG), are a transit peptide targeting the mitochondrion. The tract at residues 70 to 98 (ANQKDDSNRQQKEERVKERPRSRISFKKQ) is disordered. A compositionally biased stretch (basic and acidic residues) spans 72–98 (QKDDSNRQQKEERVKERPRSRISFKKQ).

The protein belongs to the universal ribosomal protein uL22 family. In terms of assembly, component of the mitochondrial large ribosomal subunit (mt-LSU). Mature yeast 74S mitochondrial ribosomes consist of a small (37S) and a large (54S) subunit. The 37S small subunit contains a 15S ribosomal RNA (15S mt-rRNA) and at least 32 different proteins. The 54S large subunit contains a 21S rRNA (21S mt-rRNA) and at least 45 different proteins. uL22m forms the wall of the exit tunnel.

Its subcellular location is the mitochondrion. Component of the mitochondrial ribosome (mitoribosome), a dedicated translation machinery responsible for the synthesis of mitochondrial genome-encoded proteins, including at least some of the essential transmembrane subunits of the mitochondrial respiratory chain. The mitoribosomes are attached to the mitochondrial inner membrane and translation products are cotranslationally integrated into the membrane. This chain is Large ribosomal subunit protein uL22m (mrpl22), found in Schizosaccharomyces pombe (strain 972 / ATCC 24843) (Fission yeast).